The sequence spans 1122 residues: RecBCD enzyme subunit RecC (1122 aa).

It belongs to the RecC family. Heterotrimer of RecB, RecC and RecD. All subunits contribute to DNA-binding. Interacts with YgbT (Cas1). As to quaternary structure, (Microbial infection) Lambda virus GamS protein interacts with the enzyme without displacing any of the subunits.

With respect to regulation, after reacting with DNA bearing a Chi site the holoenzyme is disassembled and loses exonuclease activity, DNA unwinding and Chi-directed DNA cleavage; RecB remains complexed with ssDNA, which may prevent holoenzyme reassembly. High levels of Mg(2+) (13 mM MgCl(2+)) or incubation with DNase allow holoenzyme reassembly, suggesting it is DNA bound to RecB that prevents reassembly. Its activity is regulated as follows. (Microbial infection) RecBCD is inhibited by the lambda virus gam protein (both GamL and GamS isoforms); in vitro a short preincubation prior to adding DNA results in maximal inhibition. Functionally, a helicase/nuclease that prepares dsDNA breaks (DSB) for recombinational DNA repair. Binds to DSBs and unwinds DNA via a rapid (&gt;1 kb/second) and highly processive (&gt;30 kb) ATP-dependent bidirectional helicase. Unwinds dsDNA until it encounters a Chi (crossover hotspot instigator, 5'-GCTGGTGG-3') sequence from the 3' direction. Cuts ssDNA a few nucleotides 3' to Chi site, by nicking one strand or switching the strand degraded (depending on the reaction conditions). The properties and activities of the enzyme are changed at Chi. The Chi-altered holoenzyme produces a long 3'-ssDNA overhang which facilitates RecA-binding to the ssDNA for homologous DNA recombination and repair. Holoenzyme degrades any linearized DNA that is unable to undergo homologous recombination. In the holoenzyme this subunit almost certainly recognizes the wild-type Chi sequence, when added to isolated RecB increases its ATP-dependent helicase processivity. The RecBC complex requires the RecD subunit for nuclease activity, but can translocate along ssDNA in both directions. The RecBCD complex does not unwind G-quadruplex DNA. This is RecBCD enzyme subunit RecC from Escherichia coli (strain K12).